The following is a 384-amino-acid chain: Alkanesulfonate monooxygenase (384 aa).

It belongs to the SsuD family.

The catalysed reaction is an alkanesulfonate + FMNH2 + O2 = an aldehyde + FMN + sulfite + H2O + 2 H(+). Its function is as follows. Catalyzes the desulfonation of aliphatic sulfonates. The sequence is that of Alkanesulfonate monooxygenase from Burkholderia thailandensis (strain ATCC 700388 / DSM 13276 / CCUG 48851 / CIP 106301 / E264).